Here is a 319-residue protein sequence, read N- to C-terminus: Quinolinate synthase (319 aa).

Iminosuccinate is bound by residues His35 and Ser52. Residue Cys97 coordinates [4Fe-4S] cluster. Residues 123–125 and Ser140 contribute to the iminosuccinate site; that span reads YIN. Cys183 serves as a coordination point for [4Fe-4S] cluster. Iminosuccinate is bound by residues 209–211 and Thr226; that span reads HPE. Cys276 serves as a coordination point for [4Fe-4S] cluster.

The protein belongs to the quinolinate synthase family. Type 2 subfamily. [4Fe-4S] cluster serves as cofactor.

Its subcellular location is the cytoplasm. The enzyme catalyses iminosuccinate + dihydroxyacetone phosphate = quinolinate + phosphate + 2 H2O + H(+). It participates in cofactor biosynthesis; NAD(+) biosynthesis; quinolinate from iminoaspartate: step 1/1. In terms of biological role, catalyzes the condensation of iminoaspartate with dihydroxyacetone phosphate to form quinolinate. The sequence is that of Quinolinate synthase from Microcystis aeruginosa (strain NIES-843 / IAM M-2473).